The sequence spans 298 residues: Lipoyl synthase (298 aa).

The [4Fe-4S] cluster site is built by Cys-40, Cys-45, Cys-51, Cys-67, Cys-71, Cys-74, and Ser-280. The 217-residue stretch at 53–269 (AVRRTATFMI…KEIAMQKGFS (217 aa)) folds into the Radical SAM core domain.

It belongs to the radical SAM superfamily. Lipoyl synthase family. The cofactor is [4Fe-4S] cluster.

The protein resides in the cytoplasm. It catalyses the reaction [[Fe-S] cluster scaffold protein carrying a second [4Fe-4S](2+) cluster] + N(6)-octanoyl-L-lysyl-[protein] + 2 oxidized [2Fe-2S]-[ferredoxin] + 2 S-adenosyl-L-methionine + 4 H(+) = [[Fe-S] cluster scaffold protein] + N(6)-[(R)-dihydrolipoyl]-L-lysyl-[protein] + 4 Fe(3+) + 2 hydrogen sulfide + 2 5'-deoxyadenosine + 2 L-methionine + 2 reduced [2Fe-2S]-[ferredoxin]. It participates in protein modification; protein lipoylation via endogenous pathway; protein N(6)-(lipoyl)lysine from octanoyl-[acyl-carrier-protein]. In terms of biological role, catalyzes the radical-mediated insertion of two sulfur atoms into the C-6 and C-8 positions of the octanoyl moiety bound to the lipoyl domains of lipoate-dependent enzymes, thereby converting the octanoylated domains into lipoylated derivatives. In Bacillus subtilis (strain 168), this protein is Lipoyl synthase.